A 166-amino-acid polypeptide reads, in one-letter code: Interferon gamma (166 aa).

Residues 1 to 23 (MKYTSYFLALLLCVLLGFSGSYG) form the signal peptide. A Pyrrolidone carboxylic acid modification is found at Gln24. 2 N-linked (GlcNAc...) asparagine glycosylation sites follow: Asn39 and Asn106.

The protein belongs to the type II (or gamma) interferon family. In terms of assembly, homodimer. Interacts with IFNGR1 (via extracellular domain); this interaction promotes IFNGR1 dimerization. As to expression, released primarily from activated T lymphocytes.

It localises to the secreted. Its function is as follows. Type II interferon produced by immune cells such as T-cells and NK cells that plays crucial roles in antimicrobial, antiviral, and antitumor responses by activating effector immune cells and enhancing antigen presentation. Primarily signals through the JAK-STAT pathway after interaction with its receptor IFNGR1 to affect gene regulation. Upon IFNG binding, IFNGR1 intracellular domain opens out to allow association of downstream signaling components JAK2, JAK1 and STAT1, leading to STAT1 activation, nuclear translocation and transcription of IFNG-regulated genes. Many of the induced genes are transcription factors such as IRF1 that are able to further drive regulation of a next wave of transcription. Plays a role in class I antigen presentation pathway by inducing a replacement of catalytic proteasome subunits with immunoproteasome subunits. In turn, increases the quantity, quality, and repertoire of peptides for class I MHC loading. Increases the efficiency of peptide generation also by inducing the expression of activator PA28 that associates with the proteasome and alters its proteolytic cleavage preference. Up-regulates as well MHC II complexes on the cell surface by promoting expression of several key molecules such as cathepsins B/CTSB, H/CTSH, and L/CTSL. Participates in the regulation of hematopoietic stem cells during development and under homeostatic conditions by affecting their development, quiescence, and differentiation. In Bubalus carabanensis (Swamp type water buffalo), this protein is Interferon gamma (IFNG).